The sequence spans 134 residues: Putative pre-16S rRNA nuclease (134 aa).

It belongs to the YqgF nuclease family.

It is found in the cytoplasm. Could be a nuclease involved in processing of the 5'-end of pre-16S rRNA. The sequence is that of Putative pre-16S rRNA nuclease from Helicobacter pylori (strain HPAG1).